Reading from the N-terminus, the 226-residue chain is Thymidylate kinase (226 aa).

An ATP-binding site is contributed by 9–16; that stretch reads GPEGSGKS.

The protein belongs to the thymidylate kinase family.

It carries out the reaction dTMP + ATP = dTDP + ADP. Functionally, phosphorylation of dTMP to form dTDP in both de novo and salvage pathways of dTTP synthesis. This Roseiflexus sp. (strain RS-1) protein is Thymidylate kinase.